Here is a 153-residue protein sequence, read N- to C-terminus: MDKDRPGLPAPDDNIEEVPSTSGVQERASEGDWENVLIEISDSSSEEEAEDAHLDSSQRGKKRKRVDDDAGGSAPAQHVPPPQLDHPGREAILYRFPLDLRRFIQAIGAAATVSFPMAQVCDVCFCPSHNKVSDLLPLVSAPRHASHRPVFRI.

The interval 1-88 (MDKDRPGLPA…VPPPQLDHPG (88 aa)) is disordered.

This is an uncharacterized protein from Epstein-Barr virus (strain P3HR-1) (HHV-4).